Here is a 380-residue protein sequence, read N- to C-terminus: tRNA (guanine(26)-N(2))-dimethyltransferase (380 aa).

The Trm1 methyltransferase domain maps to 2–374 (ITVNEGSVTI…AGIGEIEEVL (373 aa)). Positions 35, 65, 83, 109, and 110 each coordinate S-adenosyl-L-methionine. Residues Cys242, Cys245, Cys261, and Cys264 each coordinate Zn(2+).

It belongs to the class I-like SAM-binding methyltransferase superfamily. Trm1 family.

The enzyme catalyses guanosine(26) in tRNA + 2 S-adenosyl-L-methionine = N(2)-dimethylguanosine(26) in tRNA + 2 S-adenosyl-L-homocysteine + 2 H(+). Its function is as follows. Dimethylates a single guanine residue at position 26 of a number of tRNAs using S-adenosyl-L-methionine as donor of the methyl groups. The sequence is that of tRNA (guanine(26)-N(2))-dimethyltransferase from Methanothermobacter thermautotrophicus (strain ATCC 29096 / DSM 1053 / JCM 10044 / NBRC 100330 / Delta H) (Methanobacterium thermoautotrophicum).